A 519-amino-acid polypeptide reads, in one-letter code: Protein BANP (519 aa).

A phosphoserine mark is found at S19, S90, and S100. Residues 53–90 (IKTICLRLDSIEAKLQALEATCKSLEEKLDLVTNKQHS) adopt a coiled-coil conformation. K133 participates in a covalent cross-link: Glycyl lysine isopeptide (Lys-Gly) (interchain with G-Cter in SUMO2). The tract at residues 152–342 (NAVPGRRQNT…FSRRTPNSSS (191 aa)) is interaction with CUX1 and HDAC1. Residues 168–177 (GQEDSHHEDG) show a composition bias toward basic and acidic residues. The interval 168-196 (GQEDSHHEDGESGSEASDSVSSCGQAGSQ) is disordered. Positions 180 to 189 (GSEASDSVSS) are enriched in low complexity. Residues 226–322 (EMRVRCAIIP…SKCRTAWRRK (97 aa)) enclose the BEN domain. N6-acetyllysine is present on K275. Residues 327 to 364 (SLAVKSFSRRTPNSSSYCPSEPMMSTPPPASELPQPQP) are disordered. Polar residues predominate over residues 335 to 344 (RRTPNSSSYC). Phosphothreonine occurs at positions 337 and 352. Residues 342 to 393 (SYCPSEPMMSTPPPASELPQPQPQPQALHYALANAQQVQIHQIGEDGQVQVG) are DNA-binding. A compositionally biased stretch (pro residues) spans 351 to 364 (STPPPASELPQPQP).

The protein belongs to the BANP/SMAR1 family. In terms of assembly, part of a corepressor complex containing BANP, HDAC1, SIN3A, SIN3B, RBL1 and RBL2. Forms a trimeric complex in the nucleus consisting of BANP, HDAC6 and KHDRBS1/SAM68; HDAC6 keeps KHDRBS1 in a deacetylated state which inhibits the inclusion of CD44 alternate exons. The complex is disrupted by MAPK1/MAPK3-mediated phosphorylation of BANP which results in BANP export to the cytoplasm. This facilitates acetylation of KHDRBS1 and CD44 variant exon inclusion. Interacts with TP53. Interacts with CUX1/CDP. Interacts with HDAC1. MAPK1/MAPK3-mediated phosphorylation at Thr-337 and Thr-352 results in export to the cytoplasm. Down-regulated in breast cancer cell lines.

It is found in the nucleus. It localises to the nucleus speckle. The protein localises to the cytoplasm. Its function is as follows. Controls V(D)J recombination during T-cell development by repressing T-cell receptor (TCR) beta enhancer function. Binds to scaffold/matrix attachment region beta (S/MARbeta), an ATC-rich DNA sequence located upstream of the TCR beta enhancer. Represses cyclin D1 transcription by recruiting HDAC1 to its promoter, thereby diminishing H3K9ac, H3S10ph and H4K8ac levels. Promotes TP53 activation, which causes cell cycle arrest. Plays a role in the regulation of alternative splicing. Binds to CD44 pre-mRNA and negatively regulates the inclusion of CD44 proximal variable exons v2-v6 but has no effect on distal variable exons v7-v10. The protein is Protein BANP (BANP) of Homo sapiens (Human).